The chain runs to 589 residues: Sphingosine-1-phosphate lyase (589 aa).

Over methionine 1 to aspartate 58 the chain is Lumenal. An N-linked (GlcNAc...) asparagine glycan is attached at asparagine 6. The chain crosses the membrane as a helical span at residues tyrosine 59–leucine 76. The Cytoplasmic segment spans residues lysine 77–lysine 589. Position 380 is an N6-(pyridoxal phosphate)lysine (lysine 380).

The protein belongs to the group II decarboxylase family. Sphingosine-1-phosphate lyase subfamily. In terms of assembly, homodimer. Pyridoxal 5'-phosphate serves as cofactor. Glycosylated.

It is found in the endoplasmic reticulum membrane. It catalyses the reaction sphinganine 1-phosphate = hexadecanal + phosphoethanolamine. The catalysed reaction is (4R)-hydroxysphinganine 1-phosphate = (2R)-hydroxyhexadecanal + phosphoethanolamine. Its pathway is lipid metabolism; sphingolipid metabolism. Its function is as follows. Sphingosine-1-phosphate lyase that cleaves phosphorylated sphingoid bases (PSBs), such as sphingosine-1-phosphate, into fatty aldehydes and phosphoethanolamine. Prefers C-16 dihydrosphingosine-l-phosphate (DHS-P) as a substrate. Regulates intracellular levels of sphingolipid long-chain base phosphates (LCBPs). Plays a role in the regulation of global responses to nutrient deprivation in yeast. In Saccharomyces cerevisiae (strain ATCC 204508 / S288c) (Baker's yeast), this protein is Sphingosine-1-phosphate lyase.